Here is a 311-residue protein sequence, read N- to C-terminus: Uridine phosphorylase 1 (311 aa).

Phosphate-binding positions include Gly61, Arg95, and Arg139–Thr142. Uridine contacts are provided by residues Ser143–Gly144 and Gln218–Arg220.

Belongs to the PNP/UDP phosphorylase family. As to quaternary structure, homodimer. The N-terminus is blocked.

It catalyses the reaction uridine + phosphate = alpha-D-ribose 1-phosphate + uracil. The catalysed reaction is 2'-deoxyuridine + phosphate = 2-deoxy-alpha-D-ribose 1-phosphate + uracil. It participates in pyrimidine metabolism; UMP biosynthesis via salvage pathway; uracil from uridine (phosphorylase route): step 1/1. Its activity is regulated as follows. Strongly inhibited by 2,2'-anhydro-5-ethyluridine, a competitive inhibitor. Functionally, catalyzes the reversible phosphorylytic cleavage of uridine to uracil and ribose-1-phosphate which can then be utilized as carbon and energy sources or in the rescue of pyrimidine bases for nucleotide synthesis. Shows broad substrate specificity and can also accept deoxyuridine and other analogous compounds. The protein is Uridine phosphorylase 1 of Mus musculus (Mouse).